The chain runs to 146 residues: Hemoglobin subunit beta (146 aa).

Residues 2 to 146 enclose the Globin domain; sequence QWTAEEKQLI…VAHALARKYH (145 aa). Residues H63 and H92 each contribute to the heme b site.

The protein belongs to the globin family. As to quaternary structure, heterotetramer of two alpha chains and two beta chains. As to expression, red blood cells.

Functionally, involved in oxygen transport from the lung to the various peripheral tissues. In Apus apus (Common swift), this protein is Hemoglobin subunit beta (HBB).